The sequence spans 188 residues: dCTP deaminase (188 aa).

A dCTP-binding site is contributed by lysine 109–arginine 114. Glutamate 135 (proton donor/acceptor) is an active-site residue. DCTP is bound by residues glutamine 154, tyrosine 168, and glutamine 178.

It belongs to the dCTP deaminase family. In terms of assembly, homotrimer.

The catalysed reaction is dCTP + H2O + H(+) = dUTP + NH4(+). The protein operates within pyrimidine metabolism; dUMP biosynthesis; dUMP from dCTP (dUTP route): step 1/2. In terms of biological role, catalyzes the deamination of dCTP to dUTP. In Helicobacter pylori (strain Shi470), this protein is dCTP deaminase.